The following is a 337-amino-acid chain: Quercetin 2,3-dioxygenase (337 aa).

Cupin type-2 domains lie at 55-110 and 226-281; these read KGDA…MQSH and PKGD…RLDS. Positions 62, 64, 69, 103, 234, 236, 241, and 275 each coordinate Fe cation.

In terms of assembly, homodimer. It depends on Fe(2+) as a cofactor.

The catalysed reaction is quercetin + O2 = 2-(3,4-dihydroxybenzoyloxy)-4,6-dihydroxybenzoate + CO. Its pathway is flavonoid metabolism; quercetin degradation. In terms of biological role, performs the first step in the degradation of the flavonoid quercetin by a dioxygenase reaction. The enzyme catalyzes the cleavage of the O-heteroaromatic ring of the flavonol quercetin yielding the depside 2-protocatechuoyl-phloroglucinol carboxylic acid and carbon monoxide. This involves the remarkable dioxygenolytic cleavage of two carbon-carbon bonds. The protein is Quercetin 2,3-dioxygenase (qdoI) of Bacillus subtilis (strain 168).